The chain runs to 334 residues: Protein U17/U16 (334 aa).

The protein belongs to the herpesviridae US22 family.

Functionally, isoform 3 can transactivate the human immunodeficiency virus type 1 promoter. The polypeptide is Protein U17/U16 (U17/U16) (Human herpesvirus 6A (strain Uganda-1102) (HHV-6 variant A)).